Consider the following 1519-residue polypeptide: DNA (cytosine-5)-methyltransferase 4 (1519 aa).

A compositionally biased stretch (basic and acidic residues) spans 1-24 (MEMETKAGKQKKRSVDSDDDVSKE). The disordered stretch occupies residues 1-31 (MEMETKAGKQKKRSVDSDDDVSKERRPKRAA). Residue lysine 583 forms a Glycyl lysine isopeptide (Lys-Gly) (interchain with G-Cter in ubiquitin) linkage. Positions 641–668 (ENVEEEELEEVEEEDENEEDDPEENELE) are disordered. A compositionally biased stretch (acidic residues) spans 642–668 (NVEEEELEEVEEEDENEEDDPEENELE). 2 consecutive BAH domains span residues 715 to 849 (DVVV…FSLP) and 916 to 1033 (TTLK…KQFP). The SAM-dependent MTase C5-type domain occupies 1078–1512 (LATLDIFAGC…RKLKEALYLK (435 aa)). The active site involves cysteine 1183.

Belongs to the class I-like SAM-binding methyltransferase superfamily. C5-methyltransferase family. As to expression, expressed at low levels in vegetative and floral organs.

The protein localises to the nucleus. It carries out the reaction a 2'-deoxycytidine in DNA + S-adenosyl-L-methionine = a 5-methyl-2'-deoxycytidine in DNA + S-adenosyl-L-homocysteine + H(+). Functionally, maintains chromatin CpG methylation that plays a role in genomic imprinting, regulation of embryogenesis and seed viability. Required for proper patterns of CG DNA methylation in dividing cells. The sequence is that of DNA (cytosine-5)-methyltransferase 4 (MET4) from Arabidopsis thaliana (Mouse-ear cress).